A 77-amino-acid polypeptide reads, in one-letter code: TSC22 domain family protein 3 (77 aa).

Position 1 is an N-acetylmethionine (Met-1). Positions 19–40 (LKEQIRELVEKNSQLERENTLL) are leucine-zipper. The tract at residues 41-77 (KTLASPEQLEKFQSRLSPEEPAPETPEAPEAPGGSAV) is disordered. The residue at position 45 (Ser-45) is a Phosphoserine. Low complexity predominate over residues 68-77 (APEAPGGSAV).

It belongs to the TSC-22/Dip/Bun family. As to quaternary structure, can form homodimers, however it is likely to function as a monomer. Interacts with AP1 and NFKB1. Interacts with MYOD1. Interacts with HDAC1; this interaction affects HDAC1 activity on MYOG promoter and thus inhibits MYOD1 transcriptional activity.

The protein resides in the cytoplasm. It localises to the nucleus. In terms of biological role, protects T-cells from IL2 deprivation-induced apoptosis through the inhibition of FOXO3A transcriptional activity that leads to the down-regulation of the pro-apoptotic factor BCL2L11. In macrophages, plays a role in the anti-inflammatory and immunosuppressive effects of glucocorticoids and IL10. In T-cells, inhibits anti-CD3-induced NFKB1 nuclear translocation. In vitro, suppresses AP1 and NFKB1 DNA-binding activities. Inhibits myogenic differentiation and mediates anti-myogenic effects of glucocorticoids by binding and regulating MYOD1 and HDAC1 transcriptional activity resulting in reduced expression of MYOG. The chain is TSC22 domain family protein 3 (TSC22D3) from Sus scrofa (Pig).